A 374-amino-acid chain; its full sequence is Chaperone protein DnaJ (374 aa).

Residues 5-70 enclose the J domain; the sequence is DYYEVLGVSK…QKRAAYDQYG (66 aa). The CR-type zinc finger occupies 132-210; that stretch reads GTTVKIRVPT…CHGHGRVEET (79 aa). Residues Cys-145, Cys-148, Cys-162, Cys-165, Cys-184, Cys-187, Cys-198, and Cys-201 each coordinate Zn(2+). CXXCXGXG motif repeat units follow at residues 145 to 152, 162 to 169, 184 to 191, and 198 to 205; these read CKPCGGSG, CTTCGGHG, CPNCRGQG, and CKECHGHG.

This sequence belongs to the DnaJ family. Homodimer. Requires Zn(2+) as cofactor.

It localises to the cytoplasm. In terms of biological role, participates actively in the response to hyperosmotic and heat shock by preventing the aggregation of stress-denatured proteins and by disaggregating proteins, also in an autonomous, DnaK-independent fashion. Unfolded proteins bind initially to DnaJ; upon interaction with the DnaJ-bound protein, DnaK hydrolyzes its bound ATP, resulting in the formation of a stable complex. GrpE releases ADP from DnaK; ATP binding to DnaK triggers the release of the substrate protein, thus completing the reaction cycle. Several rounds of ATP-dependent interactions between DnaJ, DnaK and GrpE are required for fully efficient folding. Also involved, together with DnaK and GrpE, in the DNA replication of plasmids through activation of initiation proteins. The protein is Chaperone protein DnaJ of Saccharophagus degradans (strain 2-40 / ATCC 43961 / DSM 17024).